The chain runs to 810 residues: DNA-binding protein REB1 (810 aa).

Basic and acidic residues-rich tracts occupy residues 1 to 10 (MPSGHNDKNA) and 29 to 44 (HQNHDPQLHTKDLENK). Disordered stretches follow at residues 1–80 (MPSG…ENIS), 114–161 (NQQD…GVDD), 180–243 (NNNN…TNND), 294–313 (HGLNHQNKNHNDDTDDLSNS), and 346–365 (QDTQPHQQKSPSHDNEAGSV). Low complexity-rich tracts occupy residues 51–64 (IVESSSDVDVNNND) and 124–135 (NNNTDNGNDSNN). Positions 149 to 161 (DKNKKDAGVGVDD) are enriched in basic and acidic residues. Residues 180–191 (NNNNNNSIANDS) show a composition bias toward low complexity. The segment covering 198–208 (HDNGNNHENSQ) has biased composition (basic and acidic residues). Over residues 346 to 355 (QDTQPHQQKS) the composition is skewed to polar residues. Phosphoserine is present on Ser355. The HTH myb-type domain occupies 470 to 523 (HIFEQRGKWTAEEEQELAKLCAEKEGQWAEIGKTLGRMPEDCRDRWRNYVKCGT). Positions 497–519 (WAEIGKTLGRMPEDCRDRWRNYV) form a DNA-binding region, H-T-H motif. The segment at 572 to 667 (QNDHRNNDED…STHSKSLSNT (96 aa)) is disordered. Residues 586 to 606 (ASAAAAAAAAIQEQQQLLQQK) show a composition bias toward low complexity. Basic and acidic residues predominate over residues 627–636 (DNKDEDKPHD). Residues 643–667 (DDNSQNSMVPAPSATSTHSKSLSNT) are compositionally biased toward polar residues. The 26-residue stretch at 692 to 717 (NWTIVSERMGGTRSRIQCRYKWNKLV) folds into the Myb-like domain. A Glycyl lysine isopeptide (Lys-Gly) (interchain with G-Cter in SUMO) cross-link involves residue Lys807.

The protein resides in the nucleus. DNA-binding protein that recognizes sites within both the enhancer and the promoter of rRNA transcription, as well as upstream of many genes transcribed by RNA polymerase II. It is essential for cell growth. May stimulate or inhibit transcription. Specifically recognizes the sequence 5'-CCGGGTA-3' or 5'-CGGGTRR-3' (where R is any purine). A member of the general regulatory factors (GRFs) which act as genome partitioners. Acts as a chromatin insulator which are known as STARs (Subtelomeric anti-silencing region). STARs prevent negative or positive transcription influence by extending across chromatin to a promoter. The sequence is that of DNA-binding protein REB1 (REB1) from Saccharomyces cerevisiae (strain ATCC 204508 / S288c) (Baker's yeast).